The sequence spans 660 residues: UvrABC system protein B (660 aa).

In terms of domain architecture, Helicase ATP-binding spans Glu25–Asn183. Gly38–Thr45 serves as a coordination point for ATP. Residues Tyr91–Val114 carry the Beta-hairpin motif. One can recognise a Helicase C-terminal domain in the interval Gln431–Leu593. The UVR domain occupies Ala622–Thr657.

Belongs to the UvrB family. As to quaternary structure, forms a heterotetramer with UvrA during the search for lesions. Interacts with UvrC in an incision complex.

The protein localises to the cytoplasm. Functionally, the UvrABC repair system catalyzes the recognition and processing of DNA lesions. A damage recognition complex composed of 2 UvrA and 2 UvrB subunits scans DNA for abnormalities. Upon binding of the UvrA(2)B(2) complex to a putative damaged site, the DNA wraps around one UvrB monomer. DNA wrap is dependent on ATP binding by UvrB and probably causes local melting of the DNA helix, facilitating insertion of UvrB beta-hairpin between the DNA strands. Then UvrB probes one DNA strand for the presence of a lesion. If a lesion is found the UvrA subunits dissociate and the UvrB-DNA preincision complex is formed. This complex is subsequently bound by UvrC and the second UvrB is released. If no lesion is found, the DNA wraps around the other UvrB subunit that will check the other stand for damage. This chain is UvrABC system protein B, found in Methanococcoides burtonii (strain DSM 6242 / NBRC 107633 / OCM 468 / ACE-M).